A 590-amino-acid chain; its full sequence is Aspartate--tRNA(Asp/Asn) ligase (590 aa).

An L-aspartate-binding site is contributed by Glu-175. The tract at residues 199–202 (QQYK) is aspartate. L-aspartate contacts are provided by Arg-221 and His-450. 221-223 (RDE) provides a ligand contact to ATP. Position 484 (Glu-484) interacts with ATP. Arg-491 is an L-aspartate binding site. 536–539 (GIDR) is an ATP binding site.

The protein belongs to the class-II aminoacyl-tRNA synthetase family. Type 1 subfamily. As to quaternary structure, homodimer.

The protein resides in the cytoplasm. It catalyses the reaction tRNA(Asx) + L-aspartate + ATP = L-aspartyl-tRNA(Asx) + AMP + diphosphate. Its function is as follows. Aspartyl-tRNA synthetase with relaxed tRNA specificity since it is able to aspartylate not only its cognate tRNA(Asp) but also tRNA(Asn). Reaction proceeds in two steps: L-aspartate is first activated by ATP to form Asp-AMP and then transferred to the acceptor end of tRNA(Asp/Asn). The chain is Aspartate--tRNA(Asp/Asn) ligase from Azorhizobium caulinodans (strain ATCC 43989 / DSM 5975 / JCM 20966 / LMG 6465 / NBRC 14845 / NCIMB 13405 / ORS 571).